We begin with the raw amino-acid sequence, 168 residues long: Ribosome maturation factor RimM (168 aa).

The 73-residue stretch at 96–168 (EGDYYWTDLI…IIVVEWDADF (73 aa)) folds into the PRC barrel domain.

It belongs to the RimM family. In terms of assembly, binds ribosomal protein uS19.

Its subcellular location is the cytoplasm. Its function is as follows. An accessory protein needed during the final step in the assembly of 30S ribosomal subunit, possibly for assembly of the head region. Essential for efficient processing of 16S rRNA. May be needed both before and after RbfA during the maturation of 16S rRNA. It has affinity for free ribosomal 30S subunits but not for 70S ribosomes. The polypeptide is Ribosome maturation factor RimM (Coxiella burnetii (strain RSA 331 / Henzerling II)).